The chain runs to 37 residues: Large ribosomal subunit protein bL36c (37 aa).

This sequence belongs to the bacterial ribosomal protein bL36 family.

Its subcellular location is the plastid. It is found in the chloroplast. This chain is Large ribosomal subunit protein bL36c, found in Huperzia lucidula (Shining clubmoss).